Consider the following 429-residue polypeptide: Septin-11 (429 aa).

The residue at position 2 (Ala-2) is an N-acetylalanine. Ser-9 carries the phosphoserine modification. A Septin-type G domain is found at 38-304 (QGFCFNILCV…ELYRRCKLEE (267 aa)). A G1 motif region spans residues 48-55 (GETGIGKS). Residues 48–55 (GETGIGKS), Gly-103, 184–192 (KADTIAKNE), Gly-238, and Arg-253 contribute to the GTP site. Residues 100–103 (DTVG) form a G3 motif region. Positions 183-186 (AKAD) are G4 motif. A coiled-coil region spans residues 320–415 (QETYEAKRNE…QSQAQQSGAQ (96 aa)). Residues 398-429 (KKAAAQLLQSQAQQSGAQQTKKDKDKKNASFT) form a disordered region. Residues 401–416 (AAQLLQSQAQQSGAQQ) show a composition bias toward low complexity. Over residues 417–429 (TKKDKDKKNASFT) the composition is skewed to basic and acidic residues.

The protein belongs to the TRAFAC class TrmE-Era-EngA-EngB-Septin-like GTPase superfamily. Septin GTPase family. In terms of assembly, septins polymerize into heterooligomeric protein complexes that form filaments, and can associate with cellular membranes, actin filaments and microtubules. Forms homooligomers. GTPase activity is required for filament formation. Interacts with SEPTIN7, SEPTIN9 and SEPTIN12. In terms of tissue distribution, widely expressed, except in leukocytes.

Its subcellular location is the cytoplasm. It is found in the cytoskeleton. It localises to the synapse. The protein localises to the cell projection. The protein resides in the dendritic spine. Its subcellular location is the axon. Its function is as follows. Filament-forming cytoskeletal GTPase. May play a role in cytokinesis (Potential). May play a role in the cytoarchitecture of neurons, including dendritic arborization and dendritic spines, and in GABAergic synaptic connectivity. During Listeria monocytogenes infection, not required for the bacterial entry process, but restricts its efficacy. The protein is Septin-11 of Homo sapiens (Human).